We begin with the raw amino-acid sequence, 1118 residues long: MAAAVGRDTLPEHWSYGVCRDGRVFFINDQLRCTTWLHPRTGEPVNSGHMIRSDLPRGWEEGFTEEGASFFIDHNQQTTTFRHPVTGQFSSENSEYVLREEPHPHMSKPERNQRPSSMVSETSTAGTTSTLEAKPGPKIVKSSSKVHSFGKRDQAIRRNLNVPVVVRGWLHKQDSSGMRLWKRRWFVLADYCLFYYKDSREEAVLGSIPLPSYVISPVAPEDRISRKYSFKAVHTGMRALIYSTTTAGSQMEHSGMRTYYFSADTLEDMNAWVRAMNQAAQVLSRSSLRRDVDKVERQAMPQANHTDACQECGHVGPGHSRDCPRRGYEDSYGFNRREQEEERFRAQRDPLEGRRDRSKARSPYLPAEEDALFVDLPGGPRGQQAQPQRAEKNGVPPYGLGEQNGTNGYQRTAPPRANPEKHSQRKTGLAQAEHWTKAQKGDGRSLPLDQTLPRQGPSQPLSFPENYQSLPKSTRHLSGSSSPPPRNLPSDYKYAQDRASHLKMSSEERRAHRDGTVWQLYEWQQRQQFRHGSPTAPIGAGSPEFTEQGRSRSLLEVPRSISVPPSPSDIPPPGPPRPFPPRRPHTPAERVTVKPPEQRRSVDISLGGSPRKARGHAAKNSSHVDRRSMPSMGYMTHTVSAPSLHGKSADDTYLQLKKDLEYLDLKMTGRDLLKDRSLKPMKIAESDIDVKLSIFCEQDRILQDLEDKIRALKENKDQLESVLEVLHRQTEQYRDQPQHLEKITCQQRLLQEDLVHIRAELCRESTEMENAWNEYLKLEKDVEQLKQTLQEQHRRAFFFQEKSQIQKDLWRIEDVMAGLSANKENYRVLVGSVKNPERKTVPLFPHPSVPSLSPTESKPALQPSPPTSPVRTPLEVRLFPQLQTYVPYRPHPPQLRKVMSPLQSPTKAKPQAEDEAPPRPPLPELYSPEDQPPAVPPLPREATIIRHTSVRGLKRQSDERKRDREQGQCVNGDLKVELRSYVSEPELASLSGDVPQPSLSLVGSESRYQTLPGRGLSGSTSRLQQSSTIAPYVTLRRGLNAENSSATFSRPKSALERLYSGDHQRGKMSAEEQLERMKRHQKALVRERKRTLSQGEKTGLLSARYLSQPLPGDLGSVC.

2 consecutive WW domains span residues 8–41 (DTLP…HPRT) and 53–86 (SDLP…HPVT). Basic and acidic residues predominate over residues 100-113 (EEPHPHMSKPERNQ). A disordered region spans residues 100 to 145 (EEPHPHMSKPERNQRPSSMVSETSTAGTTSTLEAKPGPKIVKSSSK). Residues 114-131 (RPSSMVSETSTAGTTSTL) are compositionally biased toward polar residues. In terms of domain architecture, PH spans 163-281 (PVVVRGWLHK…WVRAMNQAAQ (119 aa)). Basic and acidic residues-rich tracts occupy residues 334-355 (FNRR…EGRR) and 434-443 (HWTKAQKGDG). Disordered stretches follow at residues 334 to 512 (FNRR…RRAH) and 528 to 629 (QFRH…RRSM). Positions 452 to 481 (LPRQGPSQPLSFPENYQSLPKSTRHLSGSS) are enriched in polar residues. The segment covering 494 to 512 (YAQDRASHLKMSSEERRAH) has biased composition (basic and acidic residues). 6 positions are modified to phosphoserine: serine 533, serine 542, serine 566, serine 601, serine 605, and serine 609. The interval 535-693 (TAPIGAGSPE…AESDIDVKLS (159 aa)) is interaction with CTNND1. A compositionally biased stretch (pro residues) spans 564–579 (PPSPSDIPPPGPPRPF). Residues 586 to 602 (TPAERVTVKPPEQRRSV) are compositionally biased toward basic and acidic residues. A coiled-coil region spans residues 697 to 798 (EQDRILQDLE…LQEQHRRAFF (102 aa)). Disordered regions lie at residues 839–873 (KTVP…VRTP) and 886–968 (VPYR…EQGQ). 2 positions are modified to phosphoserine: serine 857 and serine 864. Phosphothreonine is present on threonine 867. 3 positions are modified to phosphoserine: serine 868, serine 900, and serine 904. Residues 930-939 (DQPPAVPPLP) show a composition bias toward pro residues. Positions 955–966 (RQSDERKRDREQ) are enriched in basic and acidic residues. Residues serine 983 and leucine 990 each carry the phosphoserine modification. A disordered region spans residues 1003 to 1024 (GSESRYQTLPGRGLSGSTSRLQ). Residues 1064-1091 (QRGKMSAEEQLERMKRHQKALVRERKRT) adopt a coiled-coil conformation.

As to quaternary structure, interacts with CAMSAP3 and CTNND1. Interacts (via WW domains) with TSPAN33 (via cytoplasmic domain) and with PDZD11; the interaction with TSPAN33 is dependent on PDZD11 being bound to PLEKHA7 and facilitates the docking of ADAM10 to zonula adherens through interaction of TSPAN33 with ADAM10. In terms of tissue distribution, expressed in kidney and lung (at protein level).

It localises to the cell junction. Its subcellular location is the adherens junction. The protein resides in the cytoplasm. It is found in the cytoskeleton. The protein localises to the microtubule organizing center. It localises to the centrosome. In terms of biological role, required for zonula adherens biogenesis and maintenance. Acts via its interaction with CAMSAP3, which anchors microtubules at their minus-ends to zonula adherens, leading to the recruitment of KIFC3 kinesin to the junctional site. Mediates docking of ADAM10 to zonula adherens through a PDZD11-dependent interaction with the ADAM10-binding protein TSPAN33. The polypeptide is Pleckstrin homology domain-containing family A member 7 (Plekha7) (Mus musculus (Mouse)).